We begin with the raw amino-acid sequence, 379 residues long: Protein RecA (379 aa).

Gly-79–Thr-86 contacts ATP.

The protein belongs to the RecA family.

Its subcellular location is the cytoplasm. Can catalyze the hydrolysis of ATP in the presence of single-stranded DNA, the ATP-dependent uptake of single-stranded DNA by duplex DNA, and the ATP-dependent hybridization of homologous single-stranded DNAs. It interacts with LexA causing its activation and leading to its autocatalytic cleavage. This is Protein RecA from Streptococcus thermophilus.